Consider the following 163-residue polypeptide: MKSSVCVLLKVLACILLPGGLNAQKESNDDIQHYTADDCQVTPVIHVLQYPGCVPKPIPSFACIGRCASYIQVSGSKIWQMERSCMCCQESGEREASVSLFCPKAKNGEKKFKKVSTKAPLECMCRPCTGIEDANVIPQELAAFADDGSLAGYFQKSQFKAAE.

The N-terminal stretch at 1-23 is a signal peptide; it reads MKSSVCVLLKVLACILLPGGLNA. 5 disulfide bridges follow: Cys39–Cys88, Cys53–Cys102, Cys63–Cys123, Cys67–Cys125, and Cys85–Cys128. Positions 39–129 constitute a CTCK domain; it reads CQVTPVIHVL…PLECMCRPCT (91 aa).

As to quaternary structure, heterodimer of burs and pburs.

It is found in the secreted. Functionally, final heterodimeric neurohormone released at the end of the molting cycle, involved in the sclerotization (tanning) of the insect cuticle, melanization and wing spreading. The polypeptide is Bursicon (Aedes aegypti (Yellowfever mosquito)).